We begin with the raw amino-acid sequence, 100 residues long: Small ribosomal subunit protein bS18c (100 aa).

Positions 81-100 (KQFERTESTPRTTGPRTRKK) are disordered. Residues 89-100 (TPRTTGPRTRKK) are compositionally biased toward low complexity.

The protein belongs to the bacterial ribosomal protein bS18 family. In terms of assembly, part of the 30S ribosomal subunit.

It localises to the plastid. The protein resides in the chloroplast. The sequence is that of Small ribosomal subunit protein bS18c from Nandina domestica (Heavenly bamboo).